The sequence spans 115 residues: Urease subunit beta (115 aa).

This sequence belongs to the urease beta subunit family. Heterotrimer of UreA (gamma), UreB (beta) and UreC (alpha) subunits. Three heterotrimers associate to form the active enzyme.

It localises to the cytoplasm. The catalysed reaction is urea + 2 H2O + H(+) = hydrogencarbonate + 2 NH4(+). Its pathway is nitrogen metabolism; urea degradation; CO(2) and NH(3) from urea (urease route): step 1/1. The sequence is that of Urease subunit beta from Arthrobacter sp. (strain FB24).